The primary structure comprises 430 residues: Tol-Pal system protein TolB (430 aa).

An N-terminal signal peptide occupies residues 1–21 (MKQAFRVALGFLVLWASVLHA).

This sequence belongs to the TolB family. As to quaternary structure, the Tol-Pal system is composed of five core proteins: the inner membrane proteins TolA, TolQ and TolR, the periplasmic protein TolB and the outer membrane protein Pal. They form a network linking the inner and outer membranes and the peptidoglycan layer.

It is found in the periplasm. Part of the Tol-Pal system, which plays a role in outer membrane invagination during cell division and is important for maintaining outer membrane integrity. TolB occupies a key intermediary position in the Tol-Pal system because it communicates directly with both membrane-embedded components, Pal in the outer membrane and TolA in the inner membrane. The sequence is that of Tol-Pal system protein TolB from Yersinia enterocolitica serotype O:8 / biotype 1B (strain NCTC 13174 / 8081).